Reading from the N-terminus, the 948-residue chain is MDRSSKRRQVKPLAASLLEALDYDSSDDSDFKVGDASDSEGSGNGSEDASKDSGEGSCSDSEENILEEELNEDIKVKEEQLKNSAEEEVLSSEKQLIKMEKKEEEENGERPRKKKEKEKEKEKEKEKEKEREKEKEKATVSENVAASAAATTPATSPPAVNTSPSVPTTTTATEEQVSEPKKWNLRRNRPLLDFVSMEELNDMDDYDSEDDNDWRPTVVKRKGRSASQKEGSDGDNEDDEDEGSGSDEDENDEGNDEDHSSPASEGGCKKKKSKVLSRNSADDEELTNDSLTLSQSKSNEDSLILEKSQNWSSQKMDHILICCVCLGDNSEDADEIIQCDNCGITVHEGCYGVDGESDSIMSSASENSTEPWFCDACKCGVSPSCELCPNQDGIFKETDAGRWVHIVCALYVPGVAFGDIDKLRPVTLTEMNYSKYGAKECSFCEDPRFARTGVCISCDAGMCRAYFHVTCAQKEGLLSEAAAEEDIADPFFAYCKQHADRLDRKWKRKNYLALQSYCKMSLQEREKQLSPEAQARINARLQQYRAKAELARSTRPQAWVPREKLPRPLTSSASAIRKLMRKAELMGISTDIFPVDNSDTSSSVDGRRKHKQPALTADFVNYYFERNMRMIQIQENMAEQKNIKDKLENEQEKLHVEYNKLCESLEELQNLNGKLRSEGQGIWALLGRITGQKLNIPAILRAPKERKPSKKEGGTQKTSTLPAVLYSCGICKKNHDQHLLLLCDTCKLHYHLGCLDPPLTRMPRKTKNSYWQCSECDQAGSSDMEADMAMETLPDGTKRSRRQIKEPVKFVPQDVPPEPKKIPIRNTRTRGRKRSFVPEEEKHEERVPRERRQRQSVLQKKPKAEDLRTECATCKGTGDNENLVRCDECRLCYHFGCLDPPLKKSPKQTGYGWICQECDSSSSKEDENEAERKNISQELNMEQKNPKK.

A disordered region spans residues 22 to 302; it reads DYDSSDDSDF…LSQSKSNEDS (281 aa). S26 and S29 each carry phosphoserine. The segment covering 36-47 has biased composition (low complexity); the sequence is ASDSEGSGNGSE. The span at 60–71 shows a compositional bias: acidic residues; the sequence is DSEENILEEELN. Residues 72–85 show a composition bias toward basic and acidic residues; the sequence is EDIKVKEEQLKNSA. 2 positions are modified to phosphoserine: S84 and S91. Composition is skewed to basic and acidic residues over residues 95–110 and 117–139; these read QLIKMEKKEEEENGER and KEKEKEKEKEKEKEREKEKEKAT. Residues 140-174 are compositionally biased toward low complexity; that stretch reads VSENVAASAAATTPATSPPAVNTSPSVPTTTTATE. A Phosphoserine modification is found at S196. 2 stretches are compositionally biased toward acidic residues: residues 199-212 and 233-256; these read ELNDMDDYDSEDDN and DGDNEDDEDEGSGSDEDENDEGND. Y206 carries the post-translational modification Phosphotyrosine. S208 carries the phosphoserine modification. A Phosphothreonine modification is found at T287. Polar residues predominate over residues 288–297; it reads NDSLTLSQSK. Phosphoserine is present on residues S290, S294, S298, S302, and S308. The PHD-type 1 zinc-finger motif lies at 319–380; it reads ILICCVCLGD…PWFCDACKCG (62 aa). Zn(2+) contacts are provided by C322, C325, C339, C342, H347, and C350. At S359 the chain carries Phosphoserine. Zn(2+) is bound by residues C374, C377, C385, C388, H405, C408, C441, C444, C458, C463, H468, C471, C495, and H498. The segment at 382-415 adopts a C2HC pre-PHD-type zinc-finger fold; that stretch reads SPSCELCPNQDGIFKETDAGRWVHIVCALYVPGV. The PHD-type 2 zinc finger occupies 439 to 499; the sequence is KECSFCEDPR…PFFAYCKQHA (61 aa). S530 carries the phosphoserine modification. Positions 630 to 678 form a coiled coil; the sequence is MIQIQENMAEQKNIKDKLENEQEKLHVEYNKLCESLEELQNLNGKLRSE. A Glycyl lysine isopeptide (Lys-Gly) (interchain with G-Cter in SUMO2) cross-link involves residue E648. Residue Q651 is modified to Phosphoserine. The PHD-type 3 zinc finger occupies 725-779; it reads LYSCGICKKNHDQHLLLLCDTCKLHYHLGCLDPPLTRMPRKTKNSYWQCSECDQA. C728, C731, C743, C746, H751, C754, C773, and C776 together coordinate Zn(2+). A phosphoserine mark is found at S781, S782, and S835. The tract at residues 811–862 is disordered; the sequence is VPQDVPPEPKKIPIRNTRTRGRKRSFVPEEEKHEERVPRERRQRQSVLQKKP. Basic and acidic residues predominate over residues 836–850; that stretch reads FVPEEEKHEERVPRE. The segment at 868-921 adopts a PHD-type 4 zinc-finger fold; the sequence is RTECATCKGTGDNENLVRCDECRLCYHFGCLDPPLKKSPKQTGYGWICQECDSS. C871, C874, C886, C889, H894, C897, C915, and C918 together coordinate Zn(2+). Residues 920–948 are disordered; that stretch reads SSSSKEDENEAERKNISQELNMEQKNPKK. Positions 922 to 935 are enriched in basic and acidic residues; sequence SSKEDENEAERKNI. Residues 936–948 show a composition bias toward polar residues; it reads SQELNMEQKNPKK.

The protein resides in the nucleus. It is found in the chromosome. It localises to the cytoplasm. In terms of biological role, histone-binding protein. Binds preferentially to unmodified histone H3 but can also bind to a lesser extent to histone H3 trimethylated at 'Lys-9' (H3K9me3) as well as to histone H3 monomethylated at 'Lys-27' (H3K27ac) and trimethylated at 'Lys-27' (H3K27me3). Represses PDGFRA expression, thus playing a role in regulation of mesenchymal cell proliferation. Suppresses the expression of CDKN1A/p21 by reducing the level of trimethylation of histone H3 'Lys-4', leading to enhanced proliferation of germinal center B cells. The protein is PHD finger protein 14 (PHF14) of Homo sapiens (Human).